The following is a 227-amino-acid chain: Small ribosomal subunit protein uS3 (227 aa).

Residues 39-109 (IHRFFEKLTR…KIVINVDAVD (71 aa)) form the KH type-2 domain.

The protein belongs to the universal ribosomal protein uS3 family. In terms of assembly, part of the 30S ribosomal subunit. Forms a tight complex with proteins S10 and S14.

Binds the lower part of the 30S subunit head. Binds mRNA in the 70S ribosome, positioning it for translation. The chain is Small ribosomal subunit protein uS3 from Mesomycoplasma hyopneumoniae (strain 232) (Mycoplasma hyopneumoniae).